We begin with the raw amino-acid sequence, 494 residues long: Metalloprotease TIKI1 (494 aa).

A signal peptide spans 1–25 (MTMMTMMMVSWSAFLQICWILMVRA). Residues 26–467 (NQFNPGEPSG…QEHERANHDR (442 aa)) are Extracellular-facing. 2 N-linked (GlcNAc...) asparagine glycosylation sites follow: N234 and N282. Residues 468–488 (TFSGSSSRTGPALSALAVCVQ) traverse the membrane as a helical segment. Residues 489–494 (MLRLLL) are Cytoplasmic-facing.

It belongs to the TIKI family. It depends on Mn(2+) as a cofactor. Requires Co(2+) as cofactor.

It is found in the cell membrane. Its function is as follows. Metalloprotease that acts as a negative regulator of the Wnt signaling pathway by mediating the cleavage of the N-terminal residues of a subset of Wnt proteins. Following cleavage, Wnt proteins become oxidized and form large disulfide-bond oligomers, leading to their inactivation. The polypeptide is Metalloprotease TIKI1 (trabd2a) (Danio rerio (Zebrafish)).